We begin with the raw amino-acid sequence, 216 residues long: Histone doublet H4-H3 (216 aa).

A compositionally biased stretch (basic residues) spans methionine 1–glutamine 12. Residues methionine 1–glycine 23 form a disordered region.

It is found in the host nucleus. The protein localises to the host cytoplasm. It localises to the virion. Histone-like protein that is recruited to viral factories during viral replication and participates in viral DNA packaging and virion production probably by forming unstable nucleosome-like particles. May compact the viral DNA. This chain is Histone doublet H4-H3, found in Melbournevirus (MelV).